A 468-amino-acid polypeptide reads, in one-letter code: 3-isopropylmalate dehydratase large subunit (468 aa).

3 residues coordinate [4Fe-4S] cluster: Cys347, Cys407, and Cys410.

This sequence belongs to the aconitase/IPM isomerase family. LeuC type 1 subfamily. In terms of assembly, heterodimer of LeuC and LeuD. Requires [4Fe-4S] cluster as cofactor.

The enzyme catalyses (2R,3S)-3-isopropylmalate = (2S)-2-isopropylmalate. It participates in amino-acid biosynthesis; L-leucine biosynthesis; L-leucine from 3-methyl-2-oxobutanoate: step 2/4. Functionally, catalyzes the isomerization between 2-isopropylmalate and 3-isopropylmalate, via the formation of 2-isopropylmaleate. The chain is 3-isopropylmalate dehydratase large subunit from Prochlorococcus marinus (strain SARG / CCMP1375 / SS120).